Consider the following 346-residue polypeptide: 2,5-dichlorohydroquinone reductive dechlorinase (346 aa).

The GST N-terminal domain occupies 43-154; sequence PRFELFHFVF…YLCDALSGGT (112 aa). Residues 189-335 form the GST C-terminal domain; that stretch reads DRRPESMQAV…AIIQWPGHPP (147 aa).

It belongs to the GST superfamily.

It carries out the reaction 2,5-dichlorohydroquinone + 2 glutathione = chlorohydroquinone + glutathione disulfide + chloride + H(+). It catalyses the reaction chlorohydroquinone + 2 glutathione = hydroquinone + glutathione disulfide + chloride + H(+). The protein operates within xenobiotic degradation; gamma-hexachlorocyclohexane degradation. Its function is as follows. Catalyzes the degradation of 2,5-dichlorohydroquinone (2,5-DCHQ) into hydroquinone (HQ) via chlorohydroquinone (CHQ). The chain is 2,5-dichlorohydroquinone reductive dechlorinase from Sphingobium indicum (strain DSM 16412 / CCM 7286 / MTCC 6364 / B90A).